Consider the following 153-residue polypeptide: Small ribosomal subunit protein uS13 (153 aa).

The protein belongs to the universal ribosomal protein uS13 family.

The protein localises to the cytoplasm. Located at the top of the head of the 40S subunit, it contacts several helices of the 18S rRNA. In Chlamydomonas reinhardtii (Chlamydomonas smithii), this protein is Small ribosomal subunit protein uS13 (RPS18).